The primary structure comprises 209 residues: CASP-like protein 1A1 (209 aa).

Residues 1-26 (MEEAKHNEAEEAQGIEAREAKQIEAG) are disordered. Residues 1–49 (MEEAKHNEAEEAQGIEAREAKQIEAGETSRSSRKLITFEPKLVINKGIS) lie on the Cytoplasmic side of the membrane. Residues 50–70 (VLGFVLRLFAVFGTIGSALAM) form a helical membrane-spanning segment. Topologically, residues 71 to 95 (GTTHESVVSLSQLVLLKVKYSDLPT) are extracellular. A helical transmembrane segment spans residues 96–116 (LMFFVVANAISGGYLVLSLPV). The Cytoplasmic portion of the chain corresponds to 117–130 (SIFHIFSTQAKTSR). Residues 131 to 151 (IILLVVDTVMLALVSSGASAA) traverse the membrane as a helical segment. Residues 152–183 (TATVYLAHEGNTTANWPPICQQFDGFCERISG) lie on the Extracellular side of the membrane. N162 carries N-linked (GlcNAc...) asparagine glycosylation. Residues 184-204 (SLIGSFCAVILLMLIVINSAI) traverse the membrane as a helical segment. The Cytoplasmic portion of the chain corresponds to 205–209 (SLSRH).

It belongs to the Casparian strip membrane proteins (CASP) family. In terms of assembly, homodimer and heterodimers. In terms of tissue distribution, expressed in the root endodermis.

It localises to the cell membrane. The protein is CASP-like protein 1A1 of Arabidopsis thaliana (Mouse-ear cress).